Here is a 208-residue protein sequence, read N- to C-terminus: 3-demethoxyubiquinol 3-hydroxylase (208 aa).

Residues Glu57, Glu87, His90, Glu139, Glu171, and His174 each coordinate Fe cation.

This sequence belongs to the COQ7 family. The cofactor is Fe cation.

It is found in the cell membrane. The enzyme catalyses a 5-methoxy-2-methyl-3-(all-trans-polyprenyl)benzene-1,4-diol + AH2 + O2 = a 3-demethylubiquinol + A + H2O. The protein operates within cofactor biosynthesis; ubiquinone biosynthesis. Its function is as follows. Catalyzes the hydroxylation of 2-nonaprenyl-3-methyl-6-methoxy-1,4-benzoquinol during ubiquinone biosynthesis. The sequence is that of 3-demethoxyubiquinol 3-hydroxylase from Burkholderia thailandensis (strain ATCC 700388 / DSM 13276 / CCUG 48851 / CIP 106301 / E264).